The sequence spans 179 residues: ATP-dependent protease subunit HslV (179 aa).

Thr7 is a catalytic residue. Residues Gly162, Cys165, and Thr168 each coordinate Na(+).

The protein belongs to the peptidase T1B family. HslV subfamily. A double ring-shaped homohexamer of HslV is capped on each side by a ring-shaped HslU homohexamer. The assembly of the HslU/HslV complex is dependent on binding of ATP.

It is found in the cytoplasm. It carries out the reaction ATP-dependent cleavage of peptide bonds with broad specificity.. Allosterically activated by HslU binding. Functionally, protease subunit of a proteasome-like degradation complex believed to be a general protein degrading machinery. The chain is ATP-dependent protease subunit HslV from Teredinibacter turnerae (strain ATCC 39867 / T7901).